The sequence spans 500 residues: MQKVCWPYFDPDFDNLGERIYGPPCRVYIDNDSIQDCTVVKVNSENKQGLLLEVVQILTDMNLIITKSYISSDGGWFMDVFHVKDEHGNKLTDKSVINHIKHAIGTSRRESDFIKASEANNNSLEPQLADHGEHTAIEMTGTDRPGLFSEIFAAFADLHCNVMEAHAWSHNARLACIAYVSDDNTHTPIDDPSRLASIEDHLSTVIRATADPASNSTHVGHKENETDGFLAGQGKGCMNSNMERRLHQLMLSVRDFDEPFCEPSSLSLLSSKLEYCDHKERKTTIVSIGNCEERGYSIVTVKSKDRRRLMFDTICTLVDMQYVIFHAALRSDGADAFQEYFIRHIDGRALNTEGEKERVIKCLEAAIERRVCEGVKLELCAENRVGLLSDITRVLRENGLTVVRADVETQGQKSLNAFYVRDISGNKIDMEFVESVKKEMRPIHLEVKNEDTKIDTVGSDEPTASASATPQRQPQPHRFSLGDILRSQMERLSLNFVPTK.

ACT domains follow at residues 39–121, 136–213, 298–373, and 376–459; these read VVKV…EANN, AIEM…ADPA, IVTV…RVCE, and KLEL…TVGS. The segment at 450–478 is disordered; the sequence is EDTKIDTVGSDEPTASASATPQRQPQPHR. Positions 462–474 are enriched in polar residues; the sequence is PTASASATPQRQP.

In terms of biological role, may bind amino acids. This chain is ACT domain-containing protein ACR2, found in Arabidopsis thaliana (Mouse-ear cress).